The chain runs to 113 residues: MGIFQLLRDRRISSRGPGLHTPKAEPRRRKGLTTGLMTQAERQKQAHQRQAAMRETALWCTGHIRPRTHTHTGTHTQTDRERERNTQRLRDRERRENGRHTHTYTHRHTHRVL.

The interval 1-113 (MGIFQLLRDR…YTHRHTHRVL (113 aa)) is disordered. Over residues 77 to 99 (QTDRERERNTQRLRDRERRENGR) the composition is skewed to basic and acidic residues. Over residues 100–113 (HTHTYTHRHTHRVL) the composition is skewed to basic residues.

Belongs to the FAM27 family.

In Homo sapiens (Human), this protein is Protein FAM27E3 (FAM27E3).